The primary structure comprises 434 residues: Quinolone resistance transporter (434 aa).

12 helical membrane-spanning segments follow: residues 15–35 (LIPA…AVGF), 45–65 (GIGD…YFLF), 85–105 (ILLT…PKSF), 110–130 (FLLG…ITQW), 142–162 (MFVL…GLLL), 175–195 (WLFV…FLWL), 241–261 (VLLL…LNLW), 275–295 (IQIG…LLII), 306–326 (YGHL…SGWL), 333–353 (LAAL…FWTL), 367–387 (IALI…GIGL), and 396–416 (AAGL…TYIV).

Belongs to the major facilitator superfamily.

It is found in the cell inner membrane. In terms of biological role, efflux pump that mediates resistance to quinolone-type antibiotics. The chain is Quinolone resistance transporter from Acinetobacter baumannii.